The primary structure comprises 315 residues: Ribosomal protein L11 methyltransferase (315 aa).

Residues Thr164, Gly185, Asp207, and Asn249 each coordinate S-adenosyl-L-methionine.

This sequence belongs to the methyltransferase superfamily. PrmA family.

Its subcellular location is the cytoplasm. It catalyses the reaction L-lysyl-[protein] + 3 S-adenosyl-L-methionine = N(6),N(6),N(6)-trimethyl-L-lysyl-[protein] + 3 S-adenosyl-L-homocysteine + 3 H(+). Methylates ribosomal protein L11. This chain is Ribosomal protein L11 methyltransferase, found in Lactobacillus johnsonii (strain CNCM I-12250 / La1 / NCC 533).